The primary structure comprises 436 residues: GTPase Der (436 aa).

EngA-type G domains are found at residues 4-167 and 176-351; these read PIVA…DEET and IRLS…ENHK. GTP is bound by residues 10 to 17, 57 to 61, 119 to 122, 182 to 189, 229 to 233, and 294 to 297; these read GRPNVGKS, DTGGI, NKVD, DTAGM, and NKWD. The KH-like domain occupies 352 to 436; sequence KRVQSSTLNE…PIHIIPRRRN (85 aa).

It belongs to the TRAFAC class TrmE-Era-EngA-EngB-Septin-like GTPase superfamily. EngA (Der) GTPase family. As to quaternary structure, associates with the 50S ribosomal subunit.

GTPase that plays an essential role in the late steps of ribosome biogenesis. The sequence is that of GTPase Der from Staphylococcus haemolyticus (strain JCSC1435).